We begin with the raw amino-acid sequence, 367 residues long: GMP synthase [glutamine-hydrolyzing] subunit B (367 aa).

The GMPS ATP-PPase domain occupies 2–190 (FDPASFVKEI…LKLPKEISER (189 aa)). Residue 29 to 35 (SGGVDST) participates in ATP binding.

In terms of assembly, heterodimer composed of a glutamine amidotransferase subunit (A) and a GMP-binding subunit (B).

The enzyme catalyses XMP + L-glutamine + ATP + H2O = GMP + L-glutamate + AMP + diphosphate + 2 H(+). It functions in the pathway purine metabolism; GMP biosynthesis; GMP from XMP (L-Gln route): step 1/1. In terms of biological role, catalyzes the synthesis of GMP from XMP. The polypeptide is GMP synthase [glutamine-hydrolyzing] subunit B (Saccharolobus islandicus (strain M.16.27) (Sulfolobus islandicus)).